We begin with the raw amino-acid sequence, 37 residues long: Large ribosomal subunit protein bL36c (37 aa).

It belongs to the bacterial ribosomal protein bL36 family.

Its subcellular location is the plastid. It localises to the chloroplast. In Chara vulgaris (Common stonewort), this protein is Large ribosomal subunit protein bL36c.